A 440-amino-acid polypeptide reads, in one-letter code: uncharacterized protein (440 aa).

Helical transmembrane passes span 1–21, 29–49, 70–90, 101–121, 179–199, 226–246, 258–278, 343–363, 366–386, and 389–409; these read MLLV…QLYR, TVFI…SAFE, LLQM…IARI, VGVL…GIAM, TSII…LSLG, FVIR…AATS, IVAS…LLFF, IYPA…PFSF, ILTL…VGGG, and FAAI…GLLI.

Belongs to the dicarboxylate/amino acid:cation symporter (DAACS) (TC 2.A.23) family.

It is found in the cell membrane. This is an uncharacterized protein from Haemophilus influenzae (strain ATCC 51907 / DSM 11121 / KW20 / Rd).